The chain runs to 248 residues: Ras-like protein family member 11B (248 aa).

The tract at residues 29–246 (AGRRLVKIAV…ALSAKVRTVT (218 aa)) is small GTPase-like. GTP-binding positions include 40–47 (GASGVGKT), 87–94 (DTPGIQVH), and 152–155 (NKAD). The interval 205–226 (QQPSSTPEKRRTSLIPRPKSPN) is disordered.

Belongs to the small GTPase superfamily. Ras family. Widely expressed with highest levels in placenta and primary macrophages.

The catalysed reaction is GTP + H2O = GDP + phosphate + H(+). This is Ras-like protein family member 11B from Homo sapiens (Human).